Consider the following 284-residue polypeptide: MNRLQLYFRLIRLHKPIGILLLLWPTLWALWMASDGKPDWTLVAIFTLGTVLMRSAGCAVNDYADRDFDKHVQRTVDRPITSGKIKPYEALLVALVLTLLAFALIWPLNTLTKQLSIAAVIIAATYPYFKRFFAIPQAYLGIAFGFGIPMGFAAVQNTVPAAAWWLLVANVFWSVAYDTEYAMVDREDDLKLGMKTSAITFGRYDVAIIMFCYAMTLGIIGIVGWQFGLRIWFVAGLLLAAVCAAYHYTLIRSRERAGCFAAFNHNNWLGGAIFGGVALDYLLR.

A run of 8 helical transmembrane segments spans residues 16–36 (PIGILLLLWPTLWALWMASDG), 40–60 (WTLVAIFTLGTVLMRSAGCAV), 91–111 (LLVALVLTLLAFALIWPLNTL), 132–152 (FFAIPQAYLGIAFGFGIPMGF), 157–177 (NTVPAAAWWLLVANVFWSVAY), 207–227 (AIIMFCYAMTLGIIGIVGWQF), 231–251 (IWFVAGLLLAAVCAAYHYTLI), and 259–279 (CFAAFNHNNWLGGAIFGGVAL).

It belongs to the UbiA prenyltransferase family. Mg(2+) serves as cofactor.

It is found in the cell inner membrane. It carries out the reaction all-trans-octaprenyl diphosphate + 4-hydroxybenzoate = 4-hydroxy-3-(all-trans-octaprenyl)benzoate + diphosphate. It functions in the pathway cofactor biosynthesis; ubiquinone biosynthesis. In terms of biological role, catalyzes the prenylation of para-hydroxybenzoate (PHB) with an all-trans polyprenyl group. Mediates the second step in the final reaction sequence of ubiquinone-8 (UQ-8) biosynthesis, which is the condensation of the polyisoprenoid side chain with PHB, generating the first membrane-bound Q intermediate 3-octaprenyl-4-hydroxybenzoate. In Janthinobacterium sp. (strain Marseille) (Minibacterium massiliensis), this protein is 4-hydroxybenzoate octaprenyltransferase.